The following is a 151-amino-acid chain: Putative pre-16S rRNA nuclease (151 aa).

It belongs to the YqgF nuclease family.

The protein localises to the cytoplasm. Its function is as follows. Could be a nuclease involved in processing of the 5'-end of pre-16S rRNA. This is Putative pre-16S rRNA nuclease from Prochlorococcus marinus subsp. pastoris (strain CCMP1986 / NIES-2087 / MED4).